Here is a 254-residue protein sequence, read N- to C-terminus: Phosphoribosylaminoimidazole-succinocarboxamide synthase (254 aa).

Belongs to the SAICAR synthetase family.

The enzyme catalyses 5-amino-1-(5-phospho-D-ribosyl)imidazole-4-carboxylate + L-aspartate + ATP = (2S)-2-[5-amino-1-(5-phospho-beta-D-ribosyl)imidazole-4-carboxamido]succinate + ADP + phosphate + 2 H(+). It participates in purine metabolism; IMP biosynthesis via de novo pathway; 5-amino-1-(5-phospho-D-ribosyl)imidazole-4-carboxamide from 5-amino-1-(5-phospho-D-ribosyl)imidazole-4-carboxylate: step 1/2. The sequence is that of Phosphoribosylaminoimidazole-succinocarboxamide synthase from Brucella abortus (strain S19).